The following is a 322-amino-acid chain: Chromoplast-specific carotenoid-associated protein, chromoplastic (322 aa).

The transit peptide at 1–58 (MAFVSQFNQLPCKTLALNPPQPQLTSKPSVFPIASIGATARAAAGKSLISVRPAFKVR) directs the protein to the chromoplast. The disordered stretch occupies residues 67–88 (GEDKDEKYGDDSSVAVAEKEEE).

The protein belongs to the PAP/fibrillin family. As to expression, expressed in corollas. Not detected in fruits, stems, leaves, and roots.

It localises to the plastid. The protein localises to the chromoplast. In terms of biological role, may be involved in carotenoid sequestration within chromoplasts. The chain is Chromoplast-specific carotenoid-associated protein, chromoplastic (CHRC) from Cucumis sativus (Cucumber).